A 460-amino-acid chain; its full sequence is Bifunctional protein GlmU (460 aa).

Positions 1–229 are pyrophosphorylase; sequence MTNYAIILAA…FNESLGVNDR (229 aa). Residues 8–11, Lys-22, Gln-72, and 77–78 each bind UDP-N-acetyl-alpha-D-glucosamine; these read LAAG and GT. Mg(2+) is bound at residue Asp-102. The UDP-N-acetyl-alpha-D-glucosamine site is built by Gly-139, Glu-154, Asn-169, and Asn-227. Residue Asn-227 participates in Mg(2+) binding. The tract at residues 230–250 is linker; sequence VALAIAETVMRQRITQKHMVN. Residues 251–460 form an N-acetyltransferase region; that stretch reads GVTFQNPETV…RLAHHPSRSK (210 aa). 2 residues coordinate UDP-N-acetyl-alpha-D-glucosamine: Arg-332 and Lys-350. His-362 functions as the Proton acceptor in the catalytic mechanism. The UDP-N-acetyl-alpha-D-glucosamine site is built by Tyr-365 and Asn-376. Residues Ala-379, 385–386, Ser-404, Ala-422, and Arg-439 contribute to the acetyl-CoA site; that span reads NY.

This sequence in the N-terminal section; belongs to the N-acetylglucosamine-1-phosphate uridyltransferase family. The protein in the C-terminal section; belongs to the transferase hexapeptide repeat family. As to quaternary structure, homotrimer. Mg(2+) is required as a cofactor.

Its subcellular location is the cytoplasm. The catalysed reaction is alpha-D-glucosamine 1-phosphate + acetyl-CoA = N-acetyl-alpha-D-glucosamine 1-phosphate + CoA + H(+). It catalyses the reaction N-acetyl-alpha-D-glucosamine 1-phosphate + UTP + H(+) = UDP-N-acetyl-alpha-D-glucosamine + diphosphate. It functions in the pathway nucleotide-sugar biosynthesis; UDP-N-acetyl-alpha-D-glucosamine biosynthesis; N-acetyl-alpha-D-glucosamine 1-phosphate from alpha-D-glucosamine 6-phosphate (route II): step 2/2. The protein operates within nucleotide-sugar biosynthesis; UDP-N-acetyl-alpha-D-glucosamine biosynthesis; UDP-N-acetyl-alpha-D-glucosamine from N-acetyl-alpha-D-glucosamine 1-phosphate: step 1/1. Its pathway is bacterial outer membrane biogenesis; LPS lipid A biosynthesis. In terms of biological role, catalyzes the last two sequential reactions in the de novo biosynthetic pathway for UDP-N-acetylglucosamine (UDP-GlcNAc). The C-terminal domain catalyzes the transfer of acetyl group from acetyl coenzyme A to glucosamine-1-phosphate (GlcN-1-P) to produce N-acetylglucosamine-1-phosphate (GlcNAc-1-P), which is converted into UDP-GlcNAc by the transfer of uridine 5-monophosphate (from uridine 5-triphosphate), a reaction catalyzed by the N-terminal domain. The protein is Bifunctional protein GlmU of Streptococcus pyogenes serotype M1.